The primary structure comprises 407 residues: Glycolate oxidase iron-sulfur subunit (407 aa).

4Fe-4S ferredoxin-type domains lie at 14-47 (RALE…ELDG) and 66-95 (LKTQ…HNLL). [4Fe-4S] cluster is bound by residues Cys25, Cys28, Cys31, Cys35, Cys75, Cys78, Cys81, and Cys85.

In terms of assembly, the glycolate oxidase likely consists of three subunits, GlcD, GlcE and GlcF. The cofactor is [4Fe-4S] cluster.

It localises to the cell inner membrane. It carries out the reaction glycolate + A = glyoxylate + AH2. The enzyme catalyses (R)-lactate + A = pyruvate + AH2. In vitro the glycolate oxidase activity is inhibited by the sulfhydryl inhibitors CuSO4 and PCMB, by KCN, but not by the metal complexing agent EDTA. Its function is as follows. Component of a complex that catalyzes the oxidation of glycolate to glyoxylate. Is required for E.coli to grow on glycolate as a sole source of carbon. Is also able to oxidize D-lactate ((R)-lactate) with a similar rate. Does not link directly to O(2), and 2,6-dichloroindophenol (DCIP) and phenazine methosulfate (PMS) can act as artificial electron acceptors in vitro, but the physiological molecule that functions as a primary electron acceptor during glycolate oxidation is unknown. This Escherichia coli (strain K12) protein is Glycolate oxidase iron-sulfur subunit.